Reading from the N-terminus, the 360-residue chain is 45 kDa calcium-binding protein (360 aa).

The N-terminal stretch at 1-29 (MVSKQAFLFSLGSLYLSLLFVFLLMDVYA) is a signal peptide. N-linked (GlcNAc...) asparagine glycosylation is present at asparagine 33. 5 consecutive EF-hand domains span residues 96 to 131 (RNRRKLAAIFAKVDRNEDKQISANEMQRWIMEKTEE), 135 to 170 (EAVNENKLHFRAVDPDGDGHVSWDEYKIKFLASKGF), 231 to 266 (MLKFMVKEIIRDLDQDGDKKLTLSEFISLPVGTVEN), 276 to 311 (WVRDRKKEYEEVIDANHDGIVTMEELEEYMDPMNEY), and 312 to 347 (NALNEAKQMIAVADENQDHHLSLEEILKYSEYFTGS). Positions 109, 111, 113, 115, 120, 148, 150, 152, 154, 159, 244, 246, 248, 250, 255, 289, 291, 293, 300, 325, 327, 329, 331, and 336 each coordinate Ca(2+).

Belongs to the CREC family.

The protein resides in the golgi apparatus lumen. Its function is as follows. May regulate calcium-dependent activities in the endoplasmic reticulum lumen or post-ER compartment. The sequence is that of 45 kDa calcium-binding protein (sdf4) from Xenopus tropicalis (Western clawed frog).